The primary structure comprises 250 residues: UDP-2,3-diacylglucosamine hydrolase (250 aa).

5 residues coordinate Mn(2+): aspartate 7, histidine 9, aspartate 40, asparagine 78, and histidine 113. Substrate is bound at residue 78 to 79 (NR). Aspartate 121, serine 159, threonine 163, lysine 166, and histidine 194 together coordinate substrate. Positions 194 and 196 each coordinate Mn(2+).

This sequence belongs to the LpxH family. Requires Mn(2+) as cofactor.

The protein resides in the cell inner membrane. The enzyme catalyses UDP-2-N,3-O-bis[(3R)-3-hydroxytetradecanoyl]-alpha-D-glucosamine + H2O = 2-N,3-O-bis[(3R)-3-hydroxytetradecanoyl]-alpha-D-glucosaminyl 1-phosphate + UMP + 2 H(+). It participates in glycolipid biosynthesis; lipid IV(A) biosynthesis; lipid IV(A) from (3R)-3-hydroxytetradecanoyl-[acyl-carrier-protein] and UDP-N-acetyl-alpha-D-glucosamine: step 4/6. In terms of biological role, hydrolyzes the pyrophosphate bond of UDP-2,3-diacylglucosamine to yield 2,3-diacylglucosamine 1-phosphate (lipid X) and UMP by catalyzing the attack of water at the alpha-P atom. Involved in the biosynthesis of lipid A, a phosphorylated glycolipid that anchors the lipopolysaccharide to the outer membrane of the cell. The polypeptide is UDP-2,3-diacylglucosamine hydrolase (Pseudomonas fluorescens (strain ATCC BAA-477 / NRRL B-23932 / Pf-5)).